Consider the following 126-residue polypeptide: Chemocyanin (126 aa).

The signal sequence occupies residues 1-30; it reads MAQGSGSAERALVLGVVLVFLVFNCEVAES. The Phytocyanin domain occupies 31–126; that stretch reads VVYTVGDGGG…GGLKIAVTAA (96 aa). Positions 69, 109, and 114 each coordinate Cu cation. Cysteine 82 and cysteine 115 are disulfide-bonded.

Strongly expressed in stigma and style and to a lesser extent in leaves, ovary and petals. Not detected in pollen tubes, mature anthers or roots.

Functionally, diffusible chemotropic factor that induces pollen tube chemotropism. The chain is Chemocyanin from Lilium longiflorum (Trumpet lily).